We begin with the raw amino-acid sequence, 275 residues long: NH(3)-dependent NAD(+) synthetase (275 aa).

47–54 (GISGGQDS) is an ATP binding site. Asp-53 serves as a coordination point for Mg(2+). Arg-141 provides a ligand contact to deamido-NAD(+). An ATP-binding site is contributed by Thr-161. Residue Glu-166 participates in Mg(2+) binding. The deamido-NAD(+) site is built by Lys-174 and Asp-181. ATP is bound by residues Lys-190 and Thr-212. Position 261–262 (261–262 (HK)) interacts with deamido-NAD(+).

This sequence belongs to the NAD synthetase family. Homodimer.

The catalysed reaction is deamido-NAD(+) + NH4(+) + ATP = AMP + diphosphate + NAD(+) + H(+). It functions in the pathway cofactor biosynthesis; NAD(+) biosynthesis; NAD(+) from deamido-NAD(+) (ammonia route): step 1/1. Functionally, catalyzes the ATP-dependent amidation of deamido-NAD to form NAD. Uses ammonia as a nitrogen source. The protein is NH(3)-dependent NAD(+) synthetase of Lacticaseibacillus casei (strain BL23) (Lactobacillus casei).